We begin with the raw amino-acid sequence, 217 residues long: Translation initiation factor IF-3 (217 aa).

The tract at residues 185–217 (YNLPETETTRIREENREKQKEKENTSKEGNKDA) is disordered. Residues 191–217 (ETTRIREENREKQKEKENTSKEGNKDA) show a composition bias toward basic and acidic residues.

Belongs to the IF-3 family. In terms of assembly, monomer.

It localises to the cytoplasm. Its function is as follows. IF-3 binds to the 30S ribosomal subunit and shifts the equilibrium between 70S ribosomes and their 50S and 30S subunits in favor of the free subunits, thus enhancing the availability of 30S subunits on which protein synthesis initiation begins. The chain is Translation initiation factor IF-3 from Methylacidiphilum infernorum (isolate V4) (Methylokorus infernorum (strain V4)).